Consider the following 1017-residue polypeptide: EMILIN-1 (1017 aa).

Residues 1-21 (MAPRALWSCYLCCLLTIATEA) form the signal peptide. An EMI domain is found at 56–133 (HRNWCAYVVT…QGYGGDDCGE (78 aa)). Disulfide bonds link Cys60–Cys123, Cys87–Cys94, and Cys122–Cys131. 2 disordered regions span residues 134–180 (GPAS…SEKV) and 259–289 (ELGH…GPSE). Low complexity predominate over residues 154 to 167 (RPNLSGSSAGSHLS). Asn156 carries an N-linked (GlcNAc...) asparagine glycan. Coiled coils occupy residues 171–211 (GEGP…LAED), 237–266 (ETLS…LNNH), and 310–374 (LDGF…DVVT). The segment at 383-403 (RRGSELGGAAGQGGHPPGYTS) is disordered. Residues 387–398 (ELGGAAGQGGHP) are compositionally biased toward gly residues. Asn416, Asn456, Asn562, and Asn659 each carry an N-linked (GlcNAc...) asparagine glycan. The stretch at 519-573 (LHEAEAAGEAQQAVLEGLQGLLSRLRERMDAQEETAAEILLRLNLTAAQLSQLEG) forms a coiled coil. Residues 676-697 (LADLGATKDSIISEINRLQQEA) are a coiled coil. Residues Asn767 and Asn795 are each glycosylated (N-linked (GlcNAc...) asparagine). Positions 789 to 809 (RRLGALNNSLLLLEDRLQQLS) form a coiled coil. The segment covering 811-820 (KDFTGPSGKA) has biased composition (low complexity). The segment at 811–866 (KDFTGPSGKAGPPGPPGLQGPSGPAGPPGPPGKDGQQGAIGPPGPQGEQGAEGAPA) is disordered. The 51-residue stretch at 815-865 (GPSGKAGPPGPPGLQGPSGPAGPPGPPGKDGQQGAIGPPGPQGEQGAEGAP) folds into the Collagen-like domain. A compositionally biased stretch (pro residues) spans 822 to 841 (PPGPPGLQGPSGPAGPPGPP). Low complexity predominate over residues 843 to 866 (KDGQQGAIGPPGPQGEQGAEGAPA). The 148-residue stretch at 867–1014 (APVPRVAFSA…GALLYEDTEL (148 aa)) folds into the C1q domain.

As to quaternary structure, homotrimer associated through a moderately stable interaction of the C-terminal globular C1q domains, allowing the nucleation of the triple helix and then a further quaternary assembly to higher-order polymers via intermolecular disulfide bonds. Interacts with EMILIN2. Interacts with EFEMP2; this interaction promotes the incorporation of EFEMP2 into the extracellular matrix.

The protein localises to the secreted. It is found in the extracellular space. It localises to the extracellular matrix. Functionally, involved in elastic and collagen fibers formation. It is required for EFEMP2 deposition into the extracellular matrix, and collagen network assembly and cross-linking via protein-lysine 6-oxidase/LOX activity. May be responsible for anchoring smooth muscle cells to elastic fibers, and may be involved the processes that regulate vessel assembly. Has cell adhesive capacity. May have a function in placenta formation and initial organogenesis and a later role in interstitial connective tissue. The polypeptide is EMILIN-1 (Emilin1) (Mus musculus (Mouse)).